A 147-amino-acid polypeptide reads, in one-letter code: MGFTADQEALVNSSWESFKQNLPGYSVFFYTTILEKAPAAKGMFSFLKDSAGVQDSPQLQAHAEKVFGMVRDSAVQLRATGEVVLGDATLGSIHIQKGVVDPHFVVVKEALLKTIKEAVGDKWSEELSTSWEVAYDGLASAIKKAMS.

One can recognise a Globin domain in the interval 2–147 (GFTADQEALV…LASAIKKAMS (146 aa)). Nitrated tyrosine occurs at positions 25 and 30. S45 contributes to the heme b binding site. S45 carries the post-translational modification Phosphoserine. An O2-binding site is contributed by H62. K65, H94, and K97 together coordinate heme b. Y135 carries the nitrated tyrosine modification.

Belongs to the plant globin family. Monomer. In terms of processing, nitrated in effective nodules and particularly in hypoxic conditions; this mechanism may play a protective role in the symbiosis by buffering toxic peroxynitrite NO(2)(-). Nitration level decrease during nodule senescence. Phosphorylation at Ser-45 disrupts the molecular environment of its porphyrin ring oxygen binding pocket, thus leading to a reduced oxygen consumption and to the delivery of oxygen O(2) to symbiosomes. Root nodules.

It is found in the cytoplasm. Its subcellular location is the cytosol. The protein resides in the nucleus. Functionally, leghemoglobin that reversibly binds oxygen O(2) through a pentacoordinated heme iron. In root nodules, facilitates the diffusion of oxygen to the bacteroids while preventing the bacterial nitrogenase from being inactivated by buffering dioxygen, nitric oxide and carbon monoxide, and promoting the formation of reactive oxygen species (ROS, e.g. H(2)O(2)). This role is essential for symbiotic nitrogen fixation (SNF). The polypeptide is Leghemoglobin (LB3) (Medicago sativa (Alfalfa)).